Consider the following 250-residue polypeptide: 3-deoxy-manno-octulosonate cytidylyltransferase (250 aa).

It belongs to the KdsB family.

It is found in the cytoplasm. It catalyses the reaction 3-deoxy-alpha-D-manno-oct-2-ulosonate + CTP = CMP-3-deoxy-beta-D-manno-octulosonate + diphosphate. The protein operates within nucleotide-sugar biosynthesis; CMP-3-deoxy-D-manno-octulosonate biosynthesis; CMP-3-deoxy-D-manno-octulosonate from 3-deoxy-D-manno-octulosonate and CTP: step 1/1. It functions in the pathway bacterial outer membrane biogenesis; lipopolysaccharide biosynthesis. Its function is as follows. Activates KDO (a required 8-carbon sugar) for incorporation into bacterial lipopolysaccharide in Gram-negative bacteria. The protein is 3-deoxy-manno-octulosonate cytidylyltransferase of Legionella pneumophila (strain Paris).